Here is a 335-residue protein sequence, read N- to C-terminus: MSANSQPVLVADIGGTNARFALADTSLDAPLLKESIREYAVAEFPSLGDAARHHLEQIGAAASRGVFAVAGRVDGDEARITNHPWVISRSRTAAMLGFDELHLINDFAAQAMAISLLQPEDVVQVGGAAWVPGKPGQPRNYAVIGPGTGLGVGGLILRHGRCYPLETEGGHVSFPPGTPEEIRILEILSEQFGRVSNERLICGPGLVNIHRAVCEMAGIDPGQLQPVDVTARALHGDPQAMRTVDVFCAVFGAIAGDLVLTQGAWDGVFLTGGLTPKMLDSLQHSGFRQRFEHKGRFSSIMARVPSLAVMHPHAGLLGAAAYAADAERDAPGVAA.

11-16 (ADIGGT) contacts ATP.

This sequence belongs to the bacterial glucokinase family.

Its subcellular location is the cytoplasm. It carries out the reaction D-glucose + ATP = D-glucose 6-phosphate + ADP + H(+). In Stenotrophomonas maltophilia (strain K279a), this protein is Glucokinase.